Here is a 247-residue protein sequence, read N- to C-terminus: Caffeoyl-CoA O-methyltransferase 1 (247 aa).

K21 lines the substrate pocket. S-adenosyl-L-methionine is bound by residues T63, E85, 87 to 88, S93, D111, and A140; that span reads GV. D163 contributes to the substrate binding site. D163 provides a ligand contact to a divalent metal cation. An S-adenosyl-L-methionine-binding site is contributed by D165. Residues D189 and N190 each coordinate a divalent metal cation. N194 contributes to the substrate binding site.

This sequence belongs to the class I-like SAM-binding methyltransferase superfamily. Cation-dependent O-methyltransferase family. CCoAMT subfamily. Requires a divalent metal cation as cofactor.

It carries out the reaction (E)-caffeoyl-CoA + S-adenosyl-L-methionine = (E)-feruloyl-CoA + S-adenosyl-L-homocysteine + H(+). Its pathway is aromatic compound metabolism; phenylpropanoid biosynthesis. Its function is as follows. Methylates caffeoyl-CoA to feruloyl-CoA and 5-hydroxyferuloyl-CoA to sinapoyl-CoA. Plays a role in the synthesis of feruloylated polysaccharides. Involved in the reinforcement of the plant cell wall. Also involved in the responding to wounding or pathogen challenge by the increased formation of cell wall-bound ferulic acid polymers. This chain is Caffeoyl-CoA O-methyltransferase 1 (CCOAOMT1), found in Populus trichocarpa (Western balsam poplar).